Consider the following 88-residue polypeptide: Small ribosomal subunit protein uS15 (88 aa).

It belongs to the universal ribosomal protein uS15 family. Part of the 30S ribosomal subunit. Forms a bridge to the 50S subunit in the 70S ribosome, contacting the 23S rRNA.

Its function is as follows. One of the primary rRNA binding proteins, it binds directly to 16S rRNA where it helps nucleate assembly of the platform of the 30S subunit by binding and bridging several RNA helices of the 16S rRNA. Forms an intersubunit bridge (bridge B4) with the 23S rRNA of the 50S subunit in the ribosome. In Mycoplasmopsis pulmonis (strain UAB CTIP) (Mycoplasma pulmonis), this protein is Small ribosomal subunit protein uS15.